A 544-amino-acid polypeptide reads, in one-letter code: Chaperonin GroEL (544 aa).

Residues 30-33, Lys-51, 87-91, Gly-415, 478-480, and Asp-494 each bind ATP; these read TLGP, DGTTT, and NAA.

This sequence belongs to the chaperonin (HSP60) family. As to quaternary structure, forms a cylinder of 14 subunits composed of two heptameric rings stacked back-to-back. Interacts with the co-chaperonin GroES.

The protein localises to the cytoplasm. The enzyme catalyses ATP + H2O + a folded polypeptide = ADP + phosphate + an unfolded polypeptide.. Together with its co-chaperonin GroES, plays an essential role in assisting protein folding. The GroEL-GroES system forms a nano-cage that allows encapsulation of the non-native substrate proteins and provides a physical environment optimized to promote and accelerate protein folding. This is Chaperonin GroEL from Geobacter sulfurreducens (strain ATCC 51573 / DSM 12127 / PCA).